Here is a 553-residue protein sequence, read N- to C-terminus: Putative transport protein Ent638_0015 (553 aa).

Transmembrane regions (helical) follow at residues 4–24 (IALT…IGNI), 28–48 (GVGL…HFAE), 65–85 (FGLI…FFAS), 95–115 (LFAL…HKLF), and 158–178 (MSYA…MWLV). 2 consecutive RCK C-terminal domains span residues 191–276 (KKHE…VIGQ) and 279–361 (ETSL…MVGN). Helical transmembrane passes span 371–391 (MLPV…PLYV), 403–425 (AGGP…LYWF), 439–459 (IVLF…DTLA), 464–484 (ISWI…IGIL), 493–513 (YLTL…LAFA), and 533–553 (LVMF…WGMG).

Belongs to the AAE transporter (TC 2.A.81) family. YidE subfamily.

Its subcellular location is the cell membrane. The polypeptide is Putative transport protein Ent638_0015 (Enterobacter sp. (strain 638)).